The sequence spans 33 residues: Pardaxin P-3 (33 aa).

This sequence belongs to the pardaxin family. As to quaternary structure, in aqueous solution exists as a tetramer.

Its subcellular location is the secreted. It localises to the target cell membrane. Its function is as follows. Exhibits unusual shark repellent and surfactant properties. Forms voltage-dependent, ion-permeable channels in membranes. At high concentration causes cell membrane lysis. The polypeptide is Pardaxin P-3 (Pardachirus pavoninus (Peacock sole)).